The sequence spans 424 residues: Argininosuccinate synthase (424 aa).

Residues 9 to 17 (AYSGGLDTS) and Ala35 each bind ATP. Positions 86 and 91 each coordinate L-citrulline. Position 114–122 (114–122 (SHGATGKGN)) interacts with ATP. The L-aspartate site is built by Thr118, Asn122, and Asp123. Asn122 is a binding site for L-citrulline. L-citrulline contacts are provided by Arg126, Ser179, Ser188, Glu269, and Tyr281.

This sequence belongs to the argininosuccinate synthase family. Homotetramer.

It carries out the reaction L-citrulline + L-aspartate + ATP = 2-(N(omega)-L-arginino)succinate + AMP + diphosphate + H(+). Its pathway is amino-acid biosynthesis; L-arginine biosynthesis; L-arginine from L-ornithine and carbamoyl phosphate: step 2/3. The protein operates within nitrogen metabolism; urea cycle; (N(omega)-L-arginino)succinate from L-aspartate and L-citrulline: step 1/1. This is Argininosuccinate synthase from Anopheles gambiae (African malaria mosquito).